The primary structure comprises 198 residues: Na(+)-translocating NADH-quinone reductase subunit E (198 aa).

6 helical membrane-spanning segments follow: residues 11-31 (SVFI…FLAV), 35-55 (VSTA…SVPV), 77-97 (FLNF…LEMI), 110-130 (GIFL…SFMV), 140-160 (VVYG…LAGI), and 176-196 (LGIT…FSGV).

The protein belongs to the NqrDE/RnfAE family. As to quaternary structure, composed of six subunits; NqrA, NqrB, NqrC, NqrD, NqrE and NqrF.

Its subcellular location is the cell inner membrane. The enzyme catalyses a ubiquinone + n Na(+)(in) + NADH + H(+) = a ubiquinol + n Na(+)(out) + NAD(+). NQR complex catalyzes the reduction of ubiquinone-1 to ubiquinol by two successive reactions, coupled with the transport of Na(+) ions from the cytoplasm to the periplasm. NqrA to NqrE are probably involved in the second step, the conversion of ubisemiquinone to ubiquinol. This Histophilus somni (strain 129Pt) (Haemophilus somnus) protein is Na(+)-translocating NADH-quinone reductase subunit E.